The primary structure comprises 103 residues: MKKIKLNDEVIIITGKNKDSTGAVIKVLDSKVLVEGLNLAKKHVRSNPNAGVTGGITEIEVPLAVSNVAIYNSATKKADRVGIRTNKDGIKERFFKSNNEVIV.

The protein belongs to the universal ribosomal protein uL24 family. In terms of assembly, part of the 50S ribosomal subunit.

Functionally, one of two assembly initiator proteins, it binds directly to the 5'-end of the 23S rRNA, where it nucleates assembly of the 50S subunit. One of the proteins that surrounds the polypeptide exit tunnel on the outside of the subunit. The polypeptide is Large ribosomal subunit protein uL24 (Ruthia magnifica subsp. Calyptogena magnifica).